A 484-amino-acid polypeptide reads, in one-letter code: tRNA sulfurtransferase (484 aa).

Positions Ile-61–Arg-165 constitute a THUMP domain. ATP is bound by residues Leu-183–Ile-184, Lys-265, Gly-287, and Gln-296. A disulfide bridge links Cys-344 with Cys-456. Residues Leu-404–Ser-484 enclose the Rhodanese domain. Cys-456 functions as the Cysteine persulfide intermediate in the catalytic mechanism.

Belongs to the ThiI family.

It localises to the cytoplasm. It catalyses the reaction [ThiI sulfur-carrier protein]-S-sulfanyl-L-cysteine + a uridine in tRNA + 2 reduced [2Fe-2S]-[ferredoxin] + ATP + H(+) = [ThiI sulfur-carrier protein]-L-cysteine + a 4-thiouridine in tRNA + 2 oxidized [2Fe-2S]-[ferredoxin] + AMP + diphosphate. It carries out the reaction [ThiS sulfur-carrier protein]-C-terminal Gly-Gly-AMP + S-sulfanyl-L-cysteinyl-[cysteine desulfurase] + AH2 = [ThiS sulfur-carrier protein]-C-terminal-Gly-aminoethanethioate + L-cysteinyl-[cysteine desulfurase] + A + AMP + 2 H(+). It functions in the pathway cofactor biosynthesis; thiamine diphosphate biosynthesis. Catalyzes the ATP-dependent transfer of a sulfur to tRNA to produce 4-thiouridine in position 8 of tRNAs, which functions as a near-UV photosensor. Also catalyzes the transfer of sulfur to the sulfur carrier protein ThiS, forming ThiS-thiocarboxylate. This is a step in the synthesis of thiazole, in the thiamine biosynthesis pathway. The sulfur is donated as persulfide by IscS. The chain is tRNA sulfurtransferase from Histophilus somni (strain 129Pt) (Haemophilus somnus).